The primary structure comprises 108 residues: Urease subunit gamma (108 aa).

Belongs to the urease gamma subunit family. Heterotrimer of UreA (gamma), UreB (beta) and UreC (alpha) subunits. Three heterotrimers associate to form the active enzyme.

The protein resides in the cytoplasm. The catalysed reaction is urea + 2 H2O + H(+) = hydrogencarbonate + 2 NH4(+). It functions in the pathway nitrogen metabolism; urea degradation; CO(2) and NH(3) from urea (urease route): step 1/1. The polypeptide is Urease subunit gamma (Trichodesmium erythraeum (strain IMS101)).